The following is a 295-amino-acid chain: Tyrosine recombinase XerC (295 aa).

The Core-binding (CB) domain occupies 1–85 (MHILLQKYYN…ALRQFLNYLV (85 aa)). The region spanning 106–285 (YLPKNMDMEQ…DFQHLAQVYD (180 aa)) is the Tyr recombinase domain. Catalysis depends on residues arginine 145, lysine 169, histidine 237, arginine 240, and histidine 263. The O-(3'-phospho-DNA)-tyrosine intermediate role is filled by tyrosine 272.

Belongs to the 'phage' integrase family. XerC subfamily. As to quaternary structure, forms a cyclic heterotetrameric complex composed of two molecules of XerC and two molecules of XerD.

It is found in the cytoplasm. Its function is as follows. Site-specific tyrosine recombinase, which acts by catalyzing the cutting and rejoining of the recombining DNA molecules. The XerC-XerD complex is essential to convert dimers of the bacterial chromosome into monomers to permit their segregation at cell division. It also contributes to the segregational stability of plasmids. In Histophilus somni (strain 2336) (Haemophilus somnus), this protein is Tyrosine recombinase XerC.